A 132-amino-acid polypeptide reads, in one-letter code: Small ribosomal subunit protein uS8 (132 aa).

This sequence belongs to the universal ribosomal protein uS8 family. Part of the 30S ribosomal subunit. Contacts proteins S5 and S12.

Functionally, one of the primary rRNA binding proteins, it binds directly to 16S rRNA central domain where it helps coordinate assembly of the platform of the 30S subunit. In Corynebacterium glutamicum (strain R), this protein is Small ribosomal subunit protein uS8.